Here is a 208-residue protein sequence, read N- to C-terminus: uncharacterized protein (208 aa).

The protein to E.coli YfjJ.

This is an uncharacterized protein from Escherichia coli (strain K12).